The sequence spans 518 residues: Protein nucleotidyltransferase YdiU (518 aa).

Glycine 109, glycine 111, arginine 112, lysine 131, aspartate 143, glycine 144, arginine 194, and arginine 201 together coordinate ATP. Catalysis depends on aspartate 270, which acts as the Proton acceptor. 2 residues coordinate Mg(2+): asparagine 271 and aspartate 280. Aspartate 280 lines the ATP pocket.

The protein belongs to the SELO family. Mg(2+) serves as cofactor. Requires Mn(2+) as cofactor.

It carries out the reaction L-seryl-[protein] + ATP = 3-O-(5'-adenylyl)-L-seryl-[protein] + diphosphate. It catalyses the reaction L-threonyl-[protein] + ATP = 3-O-(5'-adenylyl)-L-threonyl-[protein] + diphosphate. The catalysed reaction is L-tyrosyl-[protein] + ATP = O-(5'-adenylyl)-L-tyrosyl-[protein] + diphosphate. The enzyme catalyses L-histidyl-[protein] + UTP = N(tele)-(5'-uridylyl)-L-histidyl-[protein] + diphosphate. It carries out the reaction L-seryl-[protein] + UTP = O-(5'-uridylyl)-L-seryl-[protein] + diphosphate. It catalyses the reaction L-tyrosyl-[protein] + UTP = O-(5'-uridylyl)-L-tyrosyl-[protein] + diphosphate. Nucleotidyltransferase involved in the post-translational modification of proteins. It can catalyze the addition of adenosine monophosphate (AMP) or uridine monophosphate (UMP) to a protein, resulting in modifications known as AMPylation and UMPylation. In Paraburkholderia xenovorans (strain LB400), this protein is Protein nucleotidyltransferase YdiU.